Here is a 147-residue protein sequence, read N- to C-terminus: Hemoglobin subunit epsilon (147 aa).

The region spanning 3–147 (HFTPEEKCII…VAIALAHKYH (145 aa)) is the Globin domain. S51 is modified (phosphoserine). Residues H64 and H93 each contribute to the heme b site.

Belongs to the globin family. As to expression, red blood cells.

In terms of biological role, hemoglobin epsilon chain is a beta-type chain found in early embryos. The protein is Hemoglobin subunit epsilon (HBE1) of Oryctolagus cuniculus (Rabbit).